Reading from the N-terminus, the 173-residue chain is Protein GrpE (173 aa).

Residues 1-28 (MTEEEKTKSEAEEIEQNNKEEEQEKSVE) are compositionally biased toward basic and acidic residues. The segment at 1–30 (MTEEEKTKSEAEEIEQNNKEEEQEKSVEEL) is disordered.

The protein belongs to the GrpE family. As to quaternary structure, homodimer.

The protein resides in the cytoplasm. In terms of biological role, participates actively in the response to hyperosmotic and heat shock by preventing the aggregation of stress-denatured proteins, in association with DnaK and GrpE. It is the nucleotide exchange factor for DnaK and may function as a thermosensor. Unfolded proteins bind initially to DnaJ; upon interaction with the DnaJ-bound protein, DnaK hydrolyzes its bound ATP, resulting in the formation of a stable complex. GrpE releases ADP from DnaK; ATP binding to DnaK triggers the release of the substrate protein, thus completing the reaction cycle. Several rounds of ATP-dependent interactions between DnaJ, DnaK and GrpE are required for fully efficient folding. The chain is Protein GrpE from Methanosphaera stadtmanae (strain ATCC 43021 / DSM 3091 / JCM 11832 / MCB-3).